The chain runs to 633 residues: Proline-rich protein LAS17 (633 aa).

The region spanning 16 to 127 (LPKASNKIID…KRVQKRERYA (112 aa)) is the WH1 domain. Disordered regions lie at residues 145 to 545 (REEQ…TTGD) and 563 to 606 (ALRK…PASL). Over residues 192–215 (AETFDSDQTSSFSDINSTTASAPT) the composition is skewed to low complexity. Pro residues-rich tracts occupy residues 216-225 (TPAPALPPAS) and 238-256 (SLPP…PQHN). Low complexity-rich tracts occupy residues 257–269 (SPPQ…QPQS) and 307–322 (PQQN…RNNR). Threonine 334 bears the Phosphothreonine mark. The residue at position 337 (serine 337) is a Phosphoserine. Residues 342–357 (PAPPPPPRRGPAPPPP) show a composition bias toward pro residues. Polar residues-rich tracts occupy residues 363-376 (TSNT…NSLL), 399-414 (NVTM…NSNR), and 454-465 (PQNTQAPSQATN). Over residues 479–488 (QSQIPQSAPS) the composition is skewed to low complexity. The 21-residue stretch at 547-567 (GRDALLASIRGAGGIGALRKV) folds into the WH2 domain. At serine 588 the chain carries Phosphoserine.

Interacts with KRE6, LSB3, LSB5 and YSC84.

The polypeptide is Proline-rich protein LAS17 (LAS17) (Saccharomyces cerevisiae (strain ATCC 204508 / S288c) (Baker's yeast)).